Reading from the N-terminus, the 155-residue chain is Transcription antitermination protein NusB (155 aa).

Belongs to the NusB family.

In terms of biological role, involved in transcription antitermination. Required for transcription of ribosomal RNA (rRNA) genes. Binds specifically to the boxA antiterminator sequence of the ribosomal RNA (rrn) operons. The protein is Transcription antitermination protein NusB of Ralstonia pickettii (strain 12J).